Consider the following 112-residue polypeptide: Diuretic hormone class 2 (112 aa).

The first 24 residues, 1–24 (MVRATCLLASCVLFALLLIVPASA), serve as a signal peptide directing secretion. The propeptide occupies 25-71 (YPRYPSNYFREEGQYEPEEIMDMLNRLGNLIQMERKMENYKEDITSE). Proline 104 carries the post-translational modification Proline amide. Positions 108 to 112 (RRDAH) are excised as a propeptide.

As to expression, expressed in corpora cardiaca (CC), corpora allata (CA), antennal lobe (AL) and gnathal ganglion (GNG) (at protein level). Expression in CC, CA and AL detected in most animals, expression in GNG in few animals (at protein level).

It localises to the secreted. Regulation of fluid secretion. Stimulates Malpighian tubule fluid secretion. This Agrotis ipsilon (Black cutworm moth) protein is Diuretic hormone class 2.